We begin with the raw amino-acid sequence, 290 residues long: 4-hydroxy-tetrahydrodipicolinate synthase (290 aa).

Threonine 46 serves as a coordination point for pyruvate. Tyrosine 134 (proton donor/acceptor) is an active-site residue. Lysine 163 functions as the Schiff-base intermediate with substrate in the catalytic mechanism. Residue valine 205 coordinates pyruvate.

This sequence belongs to the DapA family. As to quaternary structure, homotetramer; dimer of dimers.

The protein resides in the cytoplasm. It catalyses the reaction L-aspartate 4-semialdehyde + pyruvate = (2S,4S)-4-hydroxy-2,3,4,5-tetrahydrodipicolinate + H2O + H(+). Its pathway is amino-acid biosynthesis; L-lysine biosynthesis via DAP pathway; (S)-tetrahydrodipicolinate from L-aspartate: step 3/4. Functionally, catalyzes the condensation of (S)-aspartate-beta-semialdehyde [(S)-ASA] and pyruvate to 4-hydroxy-tetrahydrodipicolinate (HTPA). The protein is 4-hydroxy-tetrahydrodipicolinate synthase of Bacillus subtilis (strain 168).